A 438-amino-acid chain; its full sequence is tRNA wybutosine-synthesizing protein 2 homolog (438 aa).

Residues serine 209, lysine 216, glutamate 256, and 284-285 (DN) each bind S-adenosyl-L-methionine.

It belongs to the class I-like SAM-binding methyltransferase superfamily. TRM5/TYW2 family.

It carries out the reaction 4-demethylwyosine(37) in tRNA(Phe) + S-adenosyl-L-methionine = 4-demethyl-7-[(3S)-3-amino-3-carboxypropyl]wyosine(37) in tRNA(Phe) + S-methyl-5'-thioadenosine + H(+). It participates in tRNA modification; wybutosine-tRNA(Phe) biosynthesis. In terms of biological role, S-adenosyl-L-methionine-dependent transferase that acts as a component of the wybutosine biosynthesis pathway. Wybutosine is a hyper modified guanosine with a tricyclic base found at the 3'-position adjacent to the anticodon of eukaryotic phenylalanine tRNA. Catalyzes the transfer of the alpha-amino-alpha-carboxypropyl (acp) group from S-adenosyl-L-methionine to the C-7 position of 4-demethylwyosine (imG-14) to produce wybutosine-86. This is tRNA wybutosine-synthesizing protein 2 homolog (TRMT12) from Bos taurus (Bovine).